Here is a 384-residue protein sequence, read N- to C-terminus: MTEQRAGSPAGNDLRSCAVIDLDAVRTSVTALVARAGDAATMAVVKADGYGHGMIPCARAALEGGATWLGTAFLEEALALRAAGFTVPVLSWLAAPGESFAAAIAADVDLSASAGWALEEAAAAARRTGRTARVHLKADTGLGRAGATEADWPALCDAGAALEAEGVIEVIGVWSHFAFADAPGHPTVQGQIGRFRDAIDIATKAGLHPSVRHLANSAATLVSPEAHFDLVRPGVSVYGLSPGPEIGPPAAFGLRPAMTLTTHAALTKRVPAGTGVSYAHRYTTTRETTLAVVPLGYADGIPRSATNTAEVLFGGRRRRIAGTVCMDQFVLDVGDDQVAAGDEVLLFGPGDRGEPTADDWAAALGTINYEIVSRVGARVPRRYV.

Catalysis depends on lysine 46, which acts as the Proton acceptor; specific for D-alanine. Lysine 46 is modified (N6-(pyridoxal phosphate)lysine). Arginine 144 provides a ligand contact to substrate. Tyrosine 278 (proton acceptor; specific for L-alanine) is an active-site residue. Methionine 326 contacts substrate.

Belongs to the alanine racemase family. The cofactor is pyridoxal 5'-phosphate.

The catalysed reaction is L-alanine = D-alanine. Its pathway is amino-acid biosynthesis; D-alanine biosynthesis; D-alanine from L-alanine: step 1/1. Functionally, catalyzes the interconversion of L-alanine and D-alanine. May also act on other amino acids. This Frankia casuarinae (strain DSM 45818 / CECT 9043 / HFP020203 / CcI3) protein is Alanine racemase (alr).